The following is a 194-amino-acid chain: Glycerol-3-phosphate acyltransferase (194 aa).

5 helical membrane-spanning segments follow: residues 4 to 24 (ELIL…LLLA), 80 to 100 (WVAA…FLGF), 112 to 132 (VFLG…IGIV), 137 to 157 (YISL…AAVE), and 161 to 181 (LLVG…RENI).

It belongs to the PlsY family. As to quaternary structure, probably interacts with PlsX.

It is found in the cell inner membrane. It catalyses the reaction an acyl phosphate + sn-glycerol 3-phosphate = a 1-acyl-sn-glycero-3-phosphate + phosphate. The protein operates within lipid metabolism; phospholipid metabolism. Its function is as follows. Catalyzes the transfer of an acyl group from acyl-phosphate (acyl-PO(4)) to glycerol-3-phosphate (G3P) to form lysophosphatidic acid (LPA). This enzyme utilizes acyl-phosphate as fatty acyl donor, but not acyl-CoA or acyl-ACP. This is Glycerol-3-phosphate acyltransferase from Geobacter sulfurreducens (strain ATCC 51573 / DSM 12127 / PCA).